Reading from the N-terminus, the 128-residue chain is Disintegrin gabonin-1 (128 aa).

A signal peptide spans 1–20; the sequence is MIQVLLVIICLAVFPYQGSS. Residues 21–47 constitute a propeptide that is removed on maturation; that stretch reads IILESGNVNDYEIVYPKKVTVLPTGAM. The Disintegrin domain maps to 47–112; that stretch reads MNSAHPCCDP…DCPRNPNKGE (66 aa). 4 cysteine pairs are disulfide-bonded: Cys-53–Cys-76, Cys-67–Cys-73, Cys-72–Cys-97, and Cys-85–Cys-104. The Cell attachment site motif lies at 89–91; it reads RGD. The segment at 108 to 128 is disordered; it reads PNKGESDELEWSAAATGSVLM.

Belongs to the disintegrin family. Dimeric disintegrin subfamily. In terms of assembly, heterodimer with bitisgabonin (bitisgabonin-1 is the name of the heterodimer); disulfide-linked. As to expression, expressed by the venom gland.

The protein resides in the secreted. Functionally, the heterodimer bitisgabonin-1 is a potent inhibitor of the adhesion of the RGD-dependent integrin alpha-5/beta-1 (ITGA5/ITGB1) to immobilized fibronectin. The sequence is that of Disintegrin gabonin-1 from Bitis gabonica (Gaboon adder).